Consider the following 252-residue polypeptide: Chitooligosaccharide deacetylase (252 aa).

His-125 is a Mg(2+) binding site.

This sequence belongs to the YdjC deacetylase family. ChbG subfamily. Homodimer. It depends on Mg(2+) as a cofactor.

It is found in the cytoplasm. The catalysed reaction is N,N'-diacetylchitobiose + H2O = N-acetyl-beta-D-glucosaminyl-(1-&gt;4)-D-glucosamine + acetate. It carries out the reaction diacetylchitobiose-6'-phosphate + H2O = N'-monoacetylchitobiose-6'-phosphate + acetate. It participates in glycan degradation; chitin degradation. Functionally, involved in the degradation of chitin. ChbG is essential for growth on the acetylated chitooligosaccharides chitobiose and chitotriose but is dispensable for growth on cellobiose and chitosan dimer, the deacetylated form of chitobiose. Deacetylation of chitobiose-6-P and chitotriose-6-P is necessary for both the activation of the chb promoter by the regulatory protein ChbR and the hydrolysis of phosphorylated beta-glucosides by the phospho-beta-glucosidase ChbF. Catalyzes the removal of only one acetyl group from chitobiose-6-P to yield monoacetylchitobiose-6-P, the inducer of ChbR and the substrate of ChbF. This Escherichia coli O157:H7 protein is Chitooligosaccharide deacetylase.